A 352-amino-acid chain; its full sequence is S-adenosylmethionine:tRNA ribosyltransferase-isomerase (352 aa).

It belongs to the QueA family. As to quaternary structure, monomer.

It localises to the cytoplasm. The catalysed reaction is 7-aminomethyl-7-carbaguanosine(34) in tRNA + S-adenosyl-L-methionine = epoxyqueuosine(34) in tRNA + adenine + L-methionine + 2 H(+). It functions in the pathway tRNA modification; tRNA-queuosine biosynthesis. Its function is as follows. Transfers and isomerizes the ribose moiety from AdoMet to the 7-aminomethyl group of 7-deazaguanine (preQ1-tRNA) to give epoxyqueuosine (oQ-tRNA). This Vibrio cholerae serotype O1 (strain ATCC 39315 / El Tor Inaba N16961) protein is S-adenosylmethionine:tRNA ribosyltransferase-isomerase.